A 177-amino-acid polypeptide reads, in one-letter code: Protein OPG036 (177 aa).

The protein belongs to the poxviridae OPG036 family.

The protein resides in the host nucleus. Plays a role in the inhibition of host innate immune response. Within the host nucleus, inhibits activation of interferon-beta promoter by inhibiting IRF3 activation. The chain is Protein OPG036 (OPG036) from Homo sapiens (Human).